The primary structure comprises 198 residues: Endonuclease V (198 aa).

The Mg(2+) site is built by aspartate 38 and aspartate 101.

Belongs to the endonuclease V family. The cofactor is Mg(2+).

It localises to the cytoplasm. The enzyme catalyses Endonucleolytic cleavage at apurinic or apyrimidinic sites to products with a 5'-phosphate.. DNA repair enzyme involved in the repair of deaminated bases. Selectively cleaves double-stranded DNA at the second phosphodiester bond 3' to a deoxyinosine leaving behind the intact lesion on the nicked DNA. In Saccharolobus islandicus (strain M.16.4 / Kamchatka #3) (Sulfolobus islandicus), this protein is Endonuclease V.